Consider the following 128-residue polypeptide: Infection structure-specific protein 56 (128 aa).

Composition is skewed to polar residues over residues 27 to 36 (HATYPQSQPH) and 87 to 101 (TSIS…DSQS). 2 disordered regions span residues 27–48 (HATY…AVPS) and 86–128 (GTSI…STSA). A compositionally biased stretch (basic and acidic residues) spans 115–128 (KDAKKELKDPSTSA).

Functionally, general role in the development of germlings including formation of the infection structures. This is Infection structure-specific protein 56 (INF56) from Uromyces appendiculatus (Rust fungus).